The sequence spans 953 residues: Eukaryotic translation initiation factor 3 subunit A (953 aa).

Positions 323-504 (LQKMASHVLL…KSISFGLDLH (182 aa)) constitute a PCI domain. 3 coiled-coil regions span residues 593–642 (QERE…KRQA), 670–704 (MNADDIIAKQVEQLDKEKRELQTKLKTQEKKVDYF), and 732–877 (ENQE…LEER). The tract at residues 603–623 (IKKQKVENQEAEQKRLDEERR) is disordered. 2 disordered regions span residues 810–861 (ERKK…EIDR) and 893–953 (GWGD…ITMS). Composition is skewed to basic and acidic residues over residues 812-861 (KKIE…EIDR), 895-919 (GDHEDGGDRWRDERGGDRGPDRGGD), and 928-953 (WQREEPDRGGDRWRGGDRRDGMITMS).

The protein belongs to the eIF-3 subunit A family. As to quaternary structure, component of the eukaryotic translation initiation factor 3 (eIF-3) complex.

It is found in the cytoplasm. In terms of biological role, RNA-binding component of the eukaryotic translation initiation factor 3 (eIF-3) complex, which is involved in protein synthesis of a specialized repertoire of mRNAs and, together with other initiation factors, stimulates binding of mRNA and methionyl-tRNAi to the 40S ribosome. The eIF-3 complex specifically targets and initiates translation of a subset of mRNAs involved in cell proliferation. The chain is Eukaryotic translation initiation factor 3 subunit A from Nematostella vectensis (Starlet sea anemone).